We begin with the raw amino-acid sequence, 1204 residues long: Integrator complex subunit 2 (1204 aa).

Residues 428–444 (FVSLSFCMLLAFSTLVS) traverse the membrane as a helical segment.

This sequence belongs to the Integrator subunit 2 family. In terms of assembly, component of the Integrator complex, composed of core subunits INTS1, INTS2, INTS3, INTS4, INTS5, INTS6, INTS7, INTS8, INTS9/RC74, INTS10, INTS11/CPSF3L, INTS12, INTS13, INTS14 and INTS15. The core complex associates with protein phosphatase 2A subunits PPP2CA and PPP2R1A, to form the Integrator-PP2A (INTAC) complex.

The protein localises to the nucleus. Its subcellular location is the nucleus membrane. It is found in the cytoplasm. Functionally, component of the integrator complex, a multiprotein complex that terminates RNA polymerase II (Pol II) transcription in the promoter-proximal region of genes. The integrator complex provides a quality checkpoint during transcription elongation by driving premature transcription termination of transcripts that are unfavorably configured for transcriptional elongation: the complex terminates transcription by (1) catalyzing dephosphorylation of the C-terminal domain (CTD) of Pol II subunit POLR2A/RPB1 and SUPT5H/SPT5, (2) degrading the exiting nascent RNA transcript via endonuclease activity and (3) promoting the release of Pol II from bound DNA. The integrator complex is also involved in terminating the synthesis of non-coding Pol II transcripts, such as enhancer RNAs (eRNAs), small nuclear RNAs (snRNAs), telomerase RNAs and long non-coding RNAs (lncRNAs). Mediates recruitment of cytoplasmic dynein to the nuclear envelope, probably as component of the integrator complex. This is Integrator complex subunit 2 from Homo sapiens (Human).